A 465-amino-acid polypeptide reads, in one-letter code: Clusterin-like protein 1 (465 aa).

The signal sequence occupies residues 1-20 (MKPSLLVFTVYLLWLKDCHC). A coiled-coil region spans residues 62-106 (MMERREEEHTNLMKTLKKCKEEKQEALKLMNEVQEHLEEEESLCQ). Disulfide bonds link Cys-105-Cys-333, Cys-116-Cys-325, Cys-119-Cys-322, and Cys-124-Cys-315. N-linked (GlcNAc...) asparagine glycans are attached at residues Asn-196, Asn-257, Asn-285, Asn-311, Asn-351, Asn-412, and Asn-430.

This sequence belongs to the clusterin family. In terms of tissue distribution, retina-specific (at protein level). In the light-adapted retina, expressed in the outer segment of cone photoreceptors. In the dark-adapted retina, strongly expressed in the outer plexiform layer in the region of contact between the cone pedicles and second order neurons with little or no expression in the cone photoreceptor outer segments.

It localises to the secreted. The sequence is that of Clusterin-like protein 1 (CLUL1) from Canis lupus familiaris (Dog).